The chain runs to 191 residues: Ribosomal RNA small subunit methyltransferase G (191 aa).

Residues Gly62, Leu67, 111-112, and Arg124 contribute to the S-adenosyl-L-methionine site; that span reads IE.

The protein belongs to the methyltransferase superfamily. RNA methyltransferase RsmG family.

It is found in the cytoplasm. It catalyses the reaction guanosine(527) in 16S rRNA + S-adenosyl-L-methionine = N(7)-methylguanosine(527) in 16S rRNA + S-adenosyl-L-homocysteine. In terms of biological role, specifically methylates the N7 position of guanine in position 527 of 16S rRNA. This chain is Ribosomal RNA small subunit methyltransferase G, found in Rickettsia rickettsii (strain Sheila Smith).